Consider the following 67-residue polypeptide: COP9 signalosome complex subunit 9 homolog (67 aa).

Residues 1–31 form a disordered region; the sequence is MKPSLAADEMFSEGPGYMEMDESGGATGMMM.

The protein belongs to the CSN9 family. Probable component of the COP9 signalosome (CSN) complex.

Functionally, component of the COP9 signalosome complex (CSN), a complex involved in various cellular and developmental processes. The CSN complex is an essential regulator of the ubiquitin (Ubl) conjugation pathway by mediating the deneddylation of the cullin subunits of SCF-type E3 ligase complexes, leading to decrease the Ubl ligase activity. The sequence is that of COP9 signalosome complex subunit 9 homolog from Drosophila melanogaster (Fruit fly).